The primary structure comprises 282 residues: 2-dehydro-3-deoxyphosphooctonate aldolase (282 aa).

This sequence belongs to the KdsA family.

Its subcellular location is the cytoplasm. It catalyses the reaction D-arabinose 5-phosphate + phosphoenolpyruvate + H2O = 3-deoxy-alpha-D-manno-2-octulosonate-8-phosphate + phosphate. It participates in carbohydrate biosynthesis; 3-deoxy-D-manno-octulosonate biosynthesis; 3-deoxy-D-manno-octulosonate from D-ribulose 5-phosphate: step 2/3. Its pathway is bacterial outer membrane biogenesis; lipopolysaccharide biosynthesis. The protein is 2-dehydro-3-deoxyphosphooctonate aldolase of Shewanella oneidensis (strain ATCC 700550 / JCM 31522 / CIP 106686 / LMG 19005 / NCIMB 14063 / MR-1).